A 685-amino-acid polypeptide reads, in one-letter code: Delta-like protein 4 (685 aa).

The N-terminal stretch at 1-26 is a signal peptide; the sequence is MAAASRSASGWALLLLVALWQQRAAG. Topologically, residues 27-529 are extracellular; the sequence is SGVFQLQLQE…PVGLPPSFPW (503 aa). Cystine bridges form between Cys50–Cys54 and Cys61–Cys74. 2 N-linked (GlcNAc...) asparagine glycosylation sites follow: Asn108 and Asn183. In terms of domain architecture, DSL spans 173 to 217; the sequence is VICSDNYYGDNCSRLCKKRNDHFGHYVCQPDGNLSCLPGWTGEYC. The cysteines at positions 175 and 184 are disulfide-linked. 2 interaction with Notch1 regions span residues 185-187 and 191-195; these read SRL and RNDHF. Cys188 and Cys200 are oxidised to a cystine. N-linked (GlcNAc...) asparagine glycosylation is present at Asn205. 25 disulfide bridges follow: Cys208–Cys217, Cys222–Cys233, Cys226–Cys239, Cys241–Cys250, Cys253–Cys264, Cys259–Cys270, Cys272–Cys281, Cys288–Cys300, Cys294–Cys310, Cys312–Cys321, Cys328–Cys339, Cys333–Cys348, Cys350–Cys359, Cys366–Cys377, Cys371–Cys388, Cys390–Cys399, Cys406–Cys417, Cys411–Cys426, Cys428–Cys437, Cys444–Cys455, Cys449–Cys464, Cys466–Cys475, Cys484–Cys495, Cys489–Cys506, and Cys508–Cys517. EGF-like domains lie at 218 to 251, 252 to 282, 284 to 322, 324 to 360, 362 to 400, 402 to 438, 440 to 476, and 480 to 518; these read QQPI…RLCN, ECIP…LFCD, DLNY…VDCE, ELSE…LHCE, STLS…SNCE, KVDR…TYCE, HVSD…RRCE, and SIDA…SRCE. A glycan (N-linked (GlcNAc...) asparagine) is linked at Asn393. The chain crosses the membrane as a helical span at residues 530-550; the sequence is VAVSLGVGLAVLLVLLGMVAV. At 551–685 the chain is on the cytoplasmic side; sequence AVRQLRLRRP…RNECVIATEV (135 aa).

Interacts with NOTCH4. Interacts (via N-terminal DSL and MNNL domains) with NOTCH1 (via EGF-like domains). As to expression, expressed in vascular endothelium.

Its subcellular location is the cell membrane. Functionally, involved in the Notch signaling pathway as Notch ligand. Activates NOTCH1 and NOTCH4. Involved in angiogenesis; negatively regulates endothelial cell proliferation and migration and angiogenic sprouting. Essential for retinal progenitor proliferation. Required for suppressing rod fates in late retinal progenitors as well as for proper generation of other retinal cell types. During spinal cord neurogenesis, inhibits V2a interneuron fate. The protein is Delta-like protein 4 (DLL4) of Homo sapiens (Human).